The chain runs to 843 residues: KN motif and ankyrin repeat domain-containing protein 2 (843 aa).

Residues 1–31 (MAQVLHVPAPFPGTPGQASPAAFPSKEPDPP) are disordered. The segment at 1–72 (MAQVLHVPAP…AVQRRPRLGS (72 aa)) is interaction with AIFM1. A phosphoserine mark is found at Ser19, Ser83, Ser86, Ser89, and Ser92. Position 105 is an omega-N-methylarginine (Arg105). A disordered region spans residues 161–182 (LAGVGLLPPTPRSSGLSTPVAP). Position 170 is a phosphothreonine (Thr170). Coiled coils occupy residues 183-234 (SAGH…QLKS) and 282-313 (DGEAALVAKVAVLETQLKKALQELRAAQTQQV). Thr331 is subject to Phosphothreonine. Phosphoserine is present on Ser358. The segment at 410–577 (TERSCTGAPR…VASGPDPEEE (168 aa)) is disordered. Over residues 457 to 470 (AAASQDSQAADGAG) the composition is skewed to low complexity. Ser532 is modified (phosphoserine). Over residues 547 to 561 (ATTSLEGPQLSQESQ) the composition is skewed to polar residues. Residues 606 to 643 (RELKVAYTTVLQEWLRLACRSDAHPELVRRHLVTFRAM) form an ANK 0; degenerate repeat. The interval 661–827 (TALHYSVSHA…YSRMNIKCSF (167 aa)) is interaction with NCOA1. 5 ANK repeats span residues 673–703 (PVVRQLLDSGVCHVDKLNRAGYSPIMLTALA), 707–740 (TQDDIETILQLFRLGNVNAKASQAGQTALMLAVS), 745–774 (DVVRALLACEADVNIQDEDGSTALMCACEH), 778–808 (EITGLLLAVPSCDISLTDRDGSTALMVALDA), and 812–842 (EIASMLYSRMNIKCSFAPMSDYESPASSSAE).

In terms of assembly, interacts (non-phosphorylated form) with NCOA1; NCOA2 AND NCOA3. Interacts with AIFM1. Interacts with ARHGDIA; the interaction is direct and may regulate the interaction of ARHGDIA with RHOA, RAC1 and CDC42. Interacts (via ANK repeats 1-5) with KIF21A (via residues 1148-1169). Phosphorylated by casein kinase II upon estrogen stimulation. Phosphorylation induces the release by KANK2 of NCOA1 and its translocation to the nucleus where NCOA1 can activate gene transcription. As to expression, widely expressed with highest levels in liver and skeletal muscle.

The protein resides in the cytoplasm. It is found in the mitochondrion. Its function is as follows. Involved in transcription regulation by sequestering in the cytoplasm nuclear receptor coactivators such as NCOA1, NCOA2 and NCOA3. Involved in regulation of caspase-independent apoptosis by sequestering the proapoptotic factor AIFM1 in mitochondria. Pro-apoptotic stimuli can induce its proteasomal degradation allowing the translocation of AIFM1 to the nucleus to induce apoptosis. Involved in the negative control of vitamin D receptor signaling pathway. Involved in actin stress fibers formation through its interaction with ARHGDIA and the regulation of the Rho signaling pathway. May thereby play a role in cell adhesion and migration, regulating for instance podocytes migration during development of the kidney. Through the Rho signaling pathway may also regulate cell proliferation. In Mus musculus (Mouse), this protein is KN motif and ankyrin repeat domain-containing protein 2 (Kank2).